A 119-amino-acid chain; its full sequence is Ribonuclease P protein component (119 aa).

This sequence belongs to the RnpA family. Consists of a catalytic RNA component (M1 or rnpB) and a protein subunit.

It carries out the reaction Endonucleolytic cleavage of RNA, removing 5'-extranucleotides from tRNA precursor.. Its function is as follows. RNaseP catalyzes the removal of the 5'-leader sequence from pre-tRNA to produce the mature 5'-terminus. It can also cleave other RNA substrates such as 4.5S RNA. The protein component plays an auxiliary but essential role in vivo by binding to the 5'-leader sequence and broadening the substrate specificity of the ribozyme. This Photorhabdus laumondii subsp. laumondii (strain DSM 15139 / CIP 105565 / TT01) (Photorhabdus luminescens subsp. laumondii) protein is Ribonuclease P protein component.